The chain runs to 68 residues: MDKVVKFAEPGRAFAKDSIRLVKRCTKPDRKEFQKIAIATAVGFAIMGFIGFFVKLIHIPINNIIVGS.

Topologically, residues methionine 1–glutamate 32 are cytoplasmic. A helical transmembrane segment spans residues phenylalanine 33–isoleucine 61. The Extracellular segment spans residues asparagine 62–serine 68.

This sequence belongs to the SecE/SEC61-gamma family. Heterotrimeric complex composed of SEC61-alpha, SEC61-beta and SEC61-gamma.

It is found in the endoplasmic reticulum membrane. Functionally, necessary for protein translocation in the endoplasmic reticulum. This is Protein transport protein Sec61 gamma-1 subunit (SEC61G1) from Drosophila melanogaster (Fruit fly).